A 160-amino-acid chain; its full sequence is 3-dehydroquinate dehydratase (160 aa).

Tyrosine 22 serves as the catalytic Proton acceptor. The substrate site is built by asparagine 73, histidine 79, and aspartate 86. The Proton donor role is filled by histidine 99. Substrate-binding positions include 100–101 (IS) and arginine 110.

The protein belongs to the type-II 3-dehydroquinase family. Homododecamer.

The enzyme catalyses 3-dehydroquinate = 3-dehydroshikimate + H2O. It participates in metabolic intermediate biosynthesis; chorismate biosynthesis; chorismate from D-erythrose 4-phosphate and phosphoenolpyruvate: step 3/7. Catalyzes a trans-dehydration via an enolate intermediate. The sequence is that of 3-dehydroquinate dehydratase from Sulfurimonas denitrificans (strain ATCC 33889 / DSM 1251) (Thiomicrospira denitrificans (strain ATCC 33889 / DSM 1251)).